A 312-amino-acid chain; its full sequence is Putative tricarboxylate transport protein, mitochondrial (312 aa).

3 Solcar repeats span residues 23 to 111 (EKTV…LKSQ), 122 to 208 (VMRL…LKDW), and 218 to 303 (ISKP…IIEF). A run of 6 helical transmembrane segments spans residues 29-49 (IVIG…TEYV), 75-95 (VNGH…YGSI), 126-146 (LCGL…METV), 164-184 (FVHG…YKGV), 221-241 (PIVG…NTPI), and 286-306 (VCLD…FLDV).

Belongs to the mitochondrial carrier (TC 2.A.29) family.

The protein resides in the mitochondrion inner membrane. Functionally, transport of citrate across inner mitochondrial membrane. The chain is Putative tricarboxylate transport protein, mitochondrial from Caenorhabditis elegans.